The primary structure comprises 202 residues: uncharacterized protein (202 aa).

Residues 179-202 are disordered; it reads FDEQDSTPELPPNYLLDSQKKSQG.

This is an uncharacterized protein from Haemophilus influenzae (strain ATCC 51907 / DSM 11121 / KW20 / Rd).